The following is a 611-amino-acid chain: Virulence metalloprotease (611 aa).

An N-terminal signal peptide occupies residues 1–25; the sequence is MKKVQRQMKWLFLAASISAALPVSA. A propeptide spanning residues 26–199 is cleaved from the precursor; sequence AKMVQVDDPS…VLQTWEGLNH (174 aa). His346 lines the Zn(2+) pocket. Glu347 is a catalytic residue. Zn(2+)-binding residues include His350 and Glu370. His429 acts as the Proton donor in catalysis.

This sequence belongs to the peptidase M4 family. Ca(2+) is required as a cofactor. Requires Zn(2+) as cofactor. Seems to be more extensively processed.

The protein resides in the secreted. Its function is as follows. Extracellular zinc metalloprotease involved in the virulence mechanism of V.anguillarum. This is Virulence metalloprotease (empA) from Vibrio anguillarum (Listonella anguillarum).